The following is a 426-amino-acid chain: MKIEKIVAREILDSRGNPTVEVDVVLESGIMGRASVPSGASTGEHEALELRDGDKQRYGGKGVQKAVDNVNKIIAPKLIGMSSLNQRGIDYAMLALDGTKTKSNLGANAILGVSLAVAKAAASYLDLPLYRYIGGTNTYVMPVPMMNIINGGSHSDAPIAFQEFMIRPVGAPSFREGLRMGAEVFHALKKVLKDRGLSTAVGDEGGFAPNLEGTEDALNSIIAAIKAAGYEPGKDVMIGMDCASSEFYHDGIYDYTKFEGAKGKKRTAEEQIDYLEELINKFPIDSIEDGMSENDWEGWKKLTERIGDRCQLVGDDLFVTNVDFLAMGIEKGCANSILIKVNQIGSLTETLNAIEMAHRHGYTTVTSHRSGETEDATIADIAVATNSGQIKTGSLSRSDRMAKYNQLLRIEEELGDLAVYGYKRIK.

Gln162 contacts (2R)-2-phosphoglycerate. The Proton donor role is filled by Glu204. 3 residues coordinate Mg(2+): Asp241, Glu288, and Asp315. The (2R)-2-phosphoglycerate site is built by Lys340, Arg369, Ser370, and Lys391. Lys340 serves as the catalytic Proton acceptor.

This sequence belongs to the enolase family. The cofactor is Mg(2+).

Its subcellular location is the cytoplasm. It is found in the secreted. The protein resides in the cell surface. It carries out the reaction (2R)-2-phosphoglycerate = phosphoenolpyruvate + H2O. It participates in carbohydrate degradation; glycolysis; pyruvate from D-glyceraldehyde 3-phosphate: step 4/5. Functionally, catalyzes the reversible conversion of 2-phosphoglycerate (2-PG) into phosphoenolpyruvate (PEP). It is essential for the degradation of carbohydrates via glycolysis. In Bacteroides thetaiotaomicron (strain ATCC 29148 / DSM 2079 / JCM 5827 / CCUG 10774 / NCTC 10582 / VPI-5482 / E50), this protein is Enolase.